A 450-amino-acid polypeptide reads, in one-letter code: Cyclin-A2-3 (450 aa).

2 disordered regions span residues 18–53 (ALRASEVTSTTQNQQRVNTKRPALEDTRATGPNKRK) and 75–94 (NSKQIKKGRGHGLASTSQLA). Polar residues predominate over residues 23–34 (EVTSTTQNQQRV).

The protein belongs to the cyclin family. Cyclin AB subfamily. Interacts with CDKA-1. Interacts with SAMBA.

The protein localises to the nucleus. Its function is as follows. Negatively regulates endocycles and acts as a regulator of ploidy levels in endoreduplication. Promotes divisions in the guard cells (GCs) after the guard mother cells (GMC) symmetric division. This chain is Cyclin-A2-3 (CYCA2-3), found in Arabidopsis thaliana (Mouse-ear cress).